Here is a 185-residue protein sequence, read N- to C-terminus: ATP-dependent protease subunit HslV (185 aa).

The active site involves Thr6. Residues Gly162, Cys165, and Thr168 each contribute to the Na(+) site.

Belongs to the peptidase T1B family. HslV subfamily. A double ring-shaped homohexamer of HslV is capped on each side by a ring-shaped HslU homohexamer. The assembly of the HslU/HslV complex is dependent on binding of ATP.

It is found in the cytoplasm. It catalyses the reaction ATP-dependent cleavage of peptide bonds with broad specificity.. Allosterically activated by HslU binding. Functionally, protease subunit of a proteasome-like degradation complex believed to be a general protein degrading machinery. This is ATP-dependent protease subunit HslV from Nitratidesulfovibrio vulgaris (strain DSM 19637 / Miyazaki F) (Desulfovibrio vulgaris).